The following is a 361-amino-acid chain: Peptide chain release factor 1 (361 aa).

Position 240 is an N5-methylglutamine (glutamine 240).

Belongs to the prokaryotic/mitochondrial release factor family. Post-translationally, methylated by PrmC. Methylation increases the termination efficiency of RF1.

Its subcellular location is the cytoplasm. In terms of biological role, peptide chain release factor 1 directs the termination of translation in response to the peptide chain termination codons UAG and UAA. The protein is Peptide chain release factor 1 of Mycobacterium leprae (strain Br4923).